Reading from the N-terminus, the 307-residue chain is Malate dehydrogenase (307 aa).

Residues 8–13 and Asp33 each bind NAD(+); that span reads GAGRVG. Arg82 and Arg88 together coordinate substrate. Residues Asn95 and 118-120 contribute to the NAD(+) site; that span reads VSN. Positions 120 and 151 each coordinate substrate. Catalysis depends on His175, which acts as the Proton acceptor.

This sequence belongs to the LDH/MDH superfamily. MDH type 3 family.

The catalysed reaction is (S)-malate + NAD(+) = oxaloacetate + NADH + H(+). Functionally, catalyzes the reversible oxidation of malate to oxaloacetate. The sequence is that of Malate dehydrogenase from Thioalkalivibrio sulfidiphilus (strain HL-EbGR7).